Reading from the N-terminus, the 248-residue chain is Glycoprotein BILF2 (248 aa).

Residues 1 to 17 form the signal peptide; the sequence is MTHLVLLLCCCVGSVCA. Residues 19–125 form the Ig-like domain; the sequence is FSDLVKFENV…NVTLRNCSVA (107 aa). N-linked (GlcNAc...) asparagine; by host glycans are attached at residues N27, N37, N45, N73, N83, N92, N95, N104, N116, N121, N131, and N144. Cysteines 40 and 115 form a disulfide. Residues 167–191 form a disordered region; the sequence is VSHTTSTSHRPHRRPVSKRPTHKPV. A compositionally biased stretch (basic residues) spans 175–188; the sequence is HRPHRRPVSKRPTH. The helical transmembrane segment at 210 to 230 threads the bilayer; the sequence is WALLLITCAVVAPVLLIIIIS.

This sequence belongs to the Epstein-Barr virus BILF2 protein family.

It localises to the membrane. This Epstein-Barr virus (strain B95-8) (HHV-4) protein is Glycoprotein BILF2.